A 622-amino-acid polypeptide reads, in one-letter code: Sodium-dependent serotonin transporter (622 aa).

The interval 1 to 53 (MDRSGSSDFAGAAATTGRSNPAPWSDDKESPNNEDDSNEDDGDHTTPAKVTDP) is disordered. At 1 to 82 (MDRSGSSDFA…TRETWGQKAE (82 aa)) the chain is on the cytoplasmic side. A compositionally biased stretch (acidic residues) spans 32–42 (NNEDDSNEDDG). 3 consecutive transmembrane segments (helical) span residues 83-103 (FLLA…FPYI), 111-130 (AFLV…LFYM), and 155-175 (GVGY…NTII). Positions 89, 91, 92, and 96 each coordinate Na(+). Over 176 to 244 (GWAVYYLFAS…NGLDFMGPVK (69 aa)) the chain is Extracellular. Residues Cys-195 and Cys-204 are joined by a disulfide bond. A glycan (N-linked (GlcNAc...) asparagine) is linked at Asn-211. 5 helical membrane-spanning segments follow: residues 245–263 (PTLA…FSLW), 272–289 (VVWV…ILLV), 325–342 (IFFS…LSSY), 354–375 (LITS…FSVL), and 408–427 (MSGS…TLGL). Ser-328, Asn-360, Leu-425, Asp-428, and Ser-429 together coordinate Na(+). The next 4 membrane-spanning stretches (helical) occupy residues 455-473 (LFVL…PTMT), 489-509 (GLAI…FYGV), 530-549 (ICWT…FSIM), and 568-586 (VGWA…YIIY). Residues 587–622 (KFFFASKGGCRQRLQESFQPEDNCGSVVPGQQGTSV) lie on the Cytoplasmic side of the membrane.

This sequence belongs to the sodium:neurotransmitter symporter (SNF) (TC 2.A.22) family. Expression is specific to cell bodies in the ventral ganglion of the embryonic and larval nervous system.

The protein localises to the cell membrane. Functionally, terminates the action of serotonin by its high affinity sodium-dependent reuptake into presynaptic terminals. The protein is Sodium-dependent serotonin transporter (SerT) of Drosophila melanogaster (Fruit fly).